Here is a 220-residue protein sequence, read N- to C-terminus: N-(5'-phosphoribosyl)anthranilate isomerase (220 aa).

It belongs to the TrpF family.

The catalysed reaction is N-(5-phospho-beta-D-ribosyl)anthranilate = 1-(2-carboxyphenylamino)-1-deoxy-D-ribulose 5-phosphate. It functions in the pathway amino-acid biosynthesis; L-tryptophan biosynthesis; L-tryptophan from chorismate: step 3/5. The protein is N-(5'-phosphoribosyl)anthranilate isomerase of Gloeothece citriformis (strain PCC 7424) (Cyanothece sp. (strain PCC 7424)).